The following is a 416-amino-acid chain: Caspase-9 (416 aa).

Residues 1 to 92 enclose the CARD domain; sequence MDEADRRLLR…DMLASFLRTN (92 aa). T125 carries the post-translational modification Phosphothreonine; by MAPK1. Phosphotyrosine; by ABL1 is present on Y153. Residues H237 and C287 contribute to the active site. The segment at 294-320 is disordered; sequence HGFEVASTSPEDESPGSNPEPDATPFQ. A phosphoserine mark is found at S302, S307, and S310. The propeptide occupies 316–330; that stretch reads ATPFQEGLRTFDQLD. R355 carries the post-translational modification (Microbial infection) ADP-riboxanated arginine.

It belongs to the peptidase C14A family. In terms of assembly, heterotetramer that consists of two anti-parallel arranged heterodimers, each one formed by a 35 kDa (p35) and a 10 kDa (p10) subunit. Caspase-9 and APAF1 bind to each other via their respective NH2-terminal CED-3 homologous domains in the presence of cytochrome C and ATP. Interacts (inactive form) with EFHD2. Interacts with HAX1. Interacts with BIRC2/c-IAP1, XIAP/BIRC4, BIRC5/survivin, BIRC6/bruce and BIRC7/livin. Interacts with ABL1 (via SH3 domain); the interaction is direct and increases in the response of cells to genotoxic stress and ABL1/c-Abl activation. Interacts with BCL2L10. Interacts with NleF from pathogenic E.coli. Cleavages at Asp-315 by granzyme B and at Asp-330 by caspase-3 generate the two active subunits. Caspase-8 and -10 can also be involved in these processing events. In terms of processing, phosphorylated at Thr-125 by MAPK1/ERK2. Phosphorylation at Thr-125 is sufficient to block caspase-9 processing and subsequent caspase-3 activation. Phosphorylation on Tyr-153 by ABL1/c-Abl; occurs in the response of cells to DNA damage. Post-translationally, (Microbial infection) ADP-riboxanation by C.violaceum CopC blocks CASP9 processing, preventing CASP9 activation and ability to mediate intrinsic apoptosis. Ubiquitinated by BIRC6; this activity is inhibited by DIABLO/SMAC. Ubiquitous, with highest expression in the heart, moderate expression in liver, skeletal muscle, and pancreas. Low levels in all other tissues. Within the heart, specifically expressed in myocytes.

The catalysed reaction is Strict requirement for an Asp residue at position P1 and with a marked preference for His at position P2. It has a preferred cleavage sequence of Leu-Gly-His-Asp-|-Xaa.. Its activity is regulated as follows. Inhibited by the effector protein NleF that is produced by pathogenic E.coli; this inhibits apoptosis. Inhibited by BIRC6; following inhibition of BIRC6-caspase binding by DIABLO/SMAC, BIRC6 is subjected to caspase cleavage, leading to an increase in active caspases. In terms of biological role, involved in the activation cascade of caspases responsible for apoptosis execution. Binding of caspase-9 to Apaf-1 leads to activation of the protease which then cleaves and activates effector caspases caspase-3 (CASP3) or caspase-7 (CASP7). Promotes DNA damage-induced apoptosis in a ABL1/c-Abl-dependent manner. Proteolytically cleaves poly(ADP-ribose) polymerase (PARP). Cleaves BIRC6 following inhibition of BIRC6-caspase binding by DIABLO/SMAC. Lacks activity is an dominant-negative inhibitor of caspase-9. The polypeptide is Caspase-9 (CASP9) (Homo sapiens (Human)).